The primary structure comprises 892 residues: Alanine--tRNA ligase (892 aa).

His-593, His-597, Cys-694, and His-698 together coordinate Zn(2+).

It belongs to the class-II aminoacyl-tRNA synthetase family. The cofactor is Zn(2+).

Its subcellular location is the cytoplasm. It catalyses the reaction tRNA(Ala) + L-alanine + ATP = L-alanyl-tRNA(Ala) + AMP + diphosphate. Catalyzes the attachment of alanine to tRNA(Ala) in a two-step reaction: alanine is first activated by ATP to form Ala-AMP and then transferred to the acceptor end of tRNA(Ala). Also edits incorrectly charged Ser-tRNA(Ala) and Gly-tRNA(Ala) via its editing domain. This is Alanine--tRNA ligase from Helicobacter hepaticus (strain ATCC 51449 / 3B1).